Consider the following 248-residue polypeptide: Ribosomal RNA small subunit methyltransferase G (248 aa).

Residues 1–23 (MFHVKHVGPVEPAAGDPEVPPVA) are disordered. Residues G93, L98, 143–144 (AE), and R161 contribute to the S-adenosyl-L-methionine site. Residues 226–248 (VVSARRAKPPHPKSARTGKAGTR) are disordered. Positions 230–248 (RRAKPPHPKSARTGKAGTR) are enriched in basic residues.

This sequence belongs to the methyltransferase superfamily. RNA methyltransferase RsmG family.

Its subcellular location is the cytoplasm. Specifically methylates the N7 position of guanine in position 518 of 16S rRNA. The chain is Ribosomal RNA small subunit methyltransferase G from Mycolicibacterium paratuberculosis (strain ATCC BAA-968 / K-10) (Mycobacterium paratuberculosis).